The chain runs to 212 residues: Tetraspanin-31-B (212 aa).

Over 1-12 (MVCGGFTCSKNA) the chain is Cytoplasmic. A helical transmembrane segment spans residues 13–33 (LCALNVVYMLVGVLLIIVAAW). Residues 34–44 (GKGFGIVSSIH) lie on the Extracellular side of the membrane. A helical transmembrane segment spans residues 45–65 (IIGGVIAIGVFLLLIAIIGLI). The Cytoplasmic segment spans residues 66–72 (GAVSHHQ). A helical membrane pass occupies residues 73-93 (VMLFIYMVVLILVFIFQFIVS). The Extracellular portion of the chain corresponds to 94 to 175 (CSCLAMNRSQ…MLNHADEALK (82 aa)). Residues asparagine 100, asparagine 109, asparagine 117, and asparagine 134 are each glycosylated (N-linked (GlcNAc...) asparagine). Residues 176–196 (ILGGVGLFFSFTEILGVWLAF) form a helical membrane-spanning segment. Topologically, residues 197–212 (RYRNQKDPRANPSAFL) are cytoplasmic.

This sequence belongs to the tetraspanin (TM4SF) family.

Its subcellular location is the membrane. This is Tetraspanin-31-B (tspan31-b) from Xenopus laevis (African clawed frog).